The primary structure comprises 249 residues: Putative NAD(+)--arginine ADP-ribosyltransferase Vis (249 aa).

The signal sequence occupies residues 1–18 (MNTRFLLLLCCLSFTTFS). The 193-residue stretch at 31-223 (EEEVTQLAED…IGVETVKASA (193 aa)) folds into the TR mART core domain. NAD(+) contacts are provided by residues 68 to 80 (SISG…DYLR), 117 to 120 (RGTW), and Glu137. Arg117 is a catalytic residue. Residues Ser142 and Glu191 contribute to the active site. Position 191 (Glu191) interacts with NAD(+).

Belongs to the Arg-specific ADP-ribosyltransferase family.

It is found in the secreted. The enzyme catalyses L-arginyl-[protein] + NAD(+) = N(omega)-(ADP-D-ribosyl)-L-arginyl-[protein] + nicotinamide + H(+). Functionally, a probable mono(ADP-ribosyl)transferase, it may ADP-ribosylate Arg in target protein(s). Upon expression in yeast cells causes cell death. The sequence is that of Putative NAD(+)--arginine ADP-ribosyltransferase Vis from Vibrio splendidus (strain 12B01).